The chain runs to 469 residues: Extracellular endo-alpha-(1-&gt;5)-L-arabinanase 2 (469 aa).

Positions 1–26 (MFNRLFRVCFLAALIMAFTLPNSVYA) are cleaved as a signal peptide. D38 functions as the Proton acceptor in the catalytic mechanism. Substrate contacts are provided by residues D38, D122, 168 to 171 (NVVD), 188 to 190 (SYS), and 220 to 224 (HSRIE). E224 functions as the Proton donor in the catalytic mechanism. H318 contributes to the Ca(2+) binding site.

This sequence belongs to the glycosyl hydrolase 43 family. Homodimer. The cofactor is Ca(2+).

The protein resides in the secreted. It catalyses the reaction Endohydrolysis of (1-&gt;5)-alpha-arabinofuranosidic linkages in (1-&gt;5)-arabinans.. The protein operates within glycan metabolism; L-arabinan degradation. In terms of biological role, involved in the degradation of arabinan and is a key enzyme in the complete degradation of the plant cell wall. Catalyzes the internal cleavage of alpha-(1-&gt;5)-L-arabinofuranosyl residues of the alpha-1,5-L-arabinan to produce arabino-oligosaccharides and L-arabinose. It is also active toward linear branched sugar beet arabinan, and pectin from apple. This Bacillus subtilis (strain 168) protein is Extracellular endo-alpha-(1-&gt;5)-L-arabinanase 2 (abn2).